A 457-amino-acid polypeptide reads, in one-letter code: MFEEPEWVEAAPAIVGLGAATAQVRPATAPPVKGRKRRHLLATLRALEAASLSQQTPSLPGSDSEEEEEVGRKKRHLQRPSLASVSKEVGKKRKGKCQKQAPSISDSEGKEIRRKCHRQAPPLGGVSAGEEKGKRKCQEYSSLHLTQPLDSVDQTVHNSRTSTATIDPSKPSPESMSPNSSHTLSRKQWRNRQKNKRRHKNKFRPLQTPEQAPPKASIEETEVPPVPKSDSQESRAGALRARMTQRLDGARFRYLNEQLYSGPSSAARRLFQEDPEAFLLYHRGFQRQVKKWPLHPVDRIAKDLRQKPASLVVADFGCGDCRLASSVRNPVHCFDLASLDPRVTVCDMAQVPLEDESVDVAVFCLSLMGTNIRDFLEEANRVLKTGGLLKVAEVSSRFEDIRTFLGAVTKLGFKIIYKDLTNSHFFLFDFEKTGPPRVGPKAQLSGLKLQPCLYKRR.

Residues 47–237 (LEAASLSQQT…KSDSQESRAG (191 aa)) form a disordered region. Residues 51–61 (SLSQQTPSLPG) show a composition bias toward polar residues. Ser-62, Ser-64, and Ser-105 each carry phosphoserine. The span at 129–138 (GEEKGKRKCQ) shows a compositional bias: basic and acidic residues. Positions 139–183 (EYSSLHLTQPLDSVDQTVHNSRTSTATIDPSKPSPESMSPNSSHT) are enriched in polar residues. 2 positions are modified to phosphoserine: Ser-172 and Ser-177. A compositionally biased stretch (basic residues) spans 184–203 (LSRKQWRNRQKNKRRHKNKF). 6 residues coordinate S-adenosyl-L-methionine: His-282, Gly-317, Asp-335, Asp-347, Met-348, and Cys-364.

It belongs to the methyltransferase superfamily. RRP8 family. Component of the eNoSC complex, composed of SIRT1, SUV39H1 and RRP8.

Its subcellular location is the nucleus. It is found in the nucleolus. Its function is as follows. Essential component of the eNoSC (energy-dependent nucleolar silencing) complex, a complex that mediates silencing of rDNA in response to intracellular energy status and acts by recruiting histone-modifying enzymes. The eNoSC complex is able to sense the energy status of cell: upon glucose starvation, elevation of NAD(+)/NADP(+) ratio activates SIRT1, leading to histone H3 deacetylation followed by dimethylation of H3 at 'Lys-9' (H3K9me2) by SUV39H1 and the formation of silent chromatin in the rDNA locus. In the complex, RRP8 binds to H3K9me2 and probably acts as a methyltransferase. Its substrates are however unknown. This is Ribosomal RNA-processing protein 8 (Rrp8) from Mus musculus (Mouse).